We begin with the raw amino-acid sequence, 354 residues long: Histidinol-phosphate aminotransferase (354 aa).

Lysine 210 carries the post-translational modification N6-(pyridoxal phosphate)lysine.

This sequence belongs to the class-II pyridoxal-phosphate-dependent aminotransferase family. Histidinol-phosphate aminotransferase subfamily. Homodimer. Pyridoxal 5'-phosphate serves as cofactor.

The catalysed reaction is L-histidinol phosphate + 2-oxoglutarate = 3-(imidazol-4-yl)-2-oxopropyl phosphate + L-glutamate. The protein operates within amino-acid biosynthesis; L-histidine biosynthesis; L-histidine from 5-phospho-alpha-D-ribose 1-diphosphate: step 7/9. This is Histidinol-phosphate aminotransferase from Clostridium botulinum (strain 657 / Type Ba4).